A 229-amino-acid chain; its full sequence is Potassium/proton antiporter CemA (229 aa).

4 helical membrane passes run F7–F27, I114–L134, I154–I174, and I189–I209.

It belongs to the CemA family.

It is found in the plastid. The protein localises to the chloroplast inner membrane. It catalyses the reaction K(+)(in) + H(+)(out) = K(+)(out) + H(+)(in). Its function is as follows. Contributes to K(+)/H(+) antiport activity by supporting proton efflux to control proton extrusion and homeostasis in chloroplasts in a light-dependent manner to modulate photosynthesis. Prevents excessive induction of non-photochemical quenching (NPQ) under continuous-light conditions. Indirectly promotes efficient inorganic carbon uptake into chloroplasts. The sequence is that of Potassium/proton antiporter CemA from Acorus calamus var. americanus (American sweet flag).